A 153-amino-acid polypeptide reads, in one-letter code: Ribosome maturation factor RimP (153 aa).

This sequence belongs to the RimP family.

Its subcellular location is the cytoplasm. Its function is as follows. Required for maturation of 30S ribosomal subunits. The polypeptide is Ribosome maturation factor RimP (Nostoc punctiforme (strain ATCC 29133 / PCC 73102)).